Here is a 196-residue protein sequence, read N- to C-terminus: Imidazoleglycerol-phosphate dehydratase (196 aa).

The protein belongs to the imidazoleglycerol-phosphate dehydratase family.

The protein resides in the cytoplasm. The enzyme catalyses D-erythro-1-(imidazol-4-yl)glycerol 3-phosphate = 3-(imidazol-4-yl)-2-oxopropyl phosphate + H2O. It functions in the pathway amino-acid biosynthesis; L-histidine biosynthesis; L-histidine from 5-phospho-alpha-D-ribose 1-diphosphate: step 6/9. This chain is Imidazoleglycerol-phosphate dehydratase, found in Caulobacter sp. (strain K31).